A 140-amino-acid polypeptide reads, in one-letter code: Histone H2B.1, sperm (140 aa).

The interval 1–47 is disordered; sequence MPSQRSPTKRSPTKRSPQKGAGKGGKGSKRGGKARRRGGAAVRRRRR. 3 short sequence motifs (SPKK motif) span residues 6–9, 11–14, and 16–19; these read SPTK and SPQK. Composition is skewed to basic residues over residues 7–17 and 26–47; these read PTKRSPTKRSP and KGSK…RRRR. 2 positions are modified to phosphoserine: S11 and S16. An O-linked (GlcNAc) serine glycan is attached at S127. Residue K135 forms a Glycyl lysine isopeptide (Lys-Gly) (interchain with G-Cter in ubiquitin) linkage.

The protein belongs to the histone H2B family. In terms of assembly, the nucleosome is a histone octamer containing two molecules each of H2A, H2B, H3 and H4 assembled in one H3-H4 heterotetramer and two H2A-H2B heterodimers. The octamer wraps approximately 147 bp of DNA. Monoubiquitination of Lys-135 gives a specific tag for epigenetic transcriptional activation and is also prerequisite for histone H3 'Lys-4' and 'Lys-79' methylation. Post-translationally, phosphorylated on SPKK motifs 2 and 3; which may regulate DNA binding. Dephosphorylated during maturation of spermatids to mature sperm and rephosphorylated at fertilization. In terms of processing, glcNAcylation at Ser-127 promotes monoubiquitination of Lys-135. It fluctuates in response to extracellular glucose, and associates with transcribed genes.

The protein localises to the nucleus. It localises to the chromosome. Core component of nucleosome. Nucleosomes wrap and compact DNA into chromatin, limiting DNA accessibility to the cellular machineries which require DNA as a template. Histones thereby play a central role in transcription regulation, DNA repair, DNA replication and chromosomal stability. DNA accessibility is regulated via a complex set of post-translational modifications of histones, also called histone code, and nucleosome remodeling. This is Histone H2B.1, sperm from Strongylocentrotus purpuratus (Purple sea urchin).